The sequence spans 301 residues: Nitric oxide synthase-interacting protein (301 aa).

The residue at position 36 (serine 36) is a Phosphoserine. Positions 55 to 75 are U-box-like; that stretch reads DPVVTPDGYLYEREAILEYIL. The short motif at 78-101 is the Nuclear localization signal element; sequence KREIARQVKAYEKQRGARREEQKE. The segment at 131-154 is disordered; sequence PKAATLPNTEGEQPGPSVGPVGKD.

The protein belongs to the NOSIP family. In terms of assembly, interacts with NOS1 and NOS3. Interacts with PP2A holoenzyme, containing PPP2CA, PPP2CB, PPP2R1A and PPP2R2A subunits.

The protein resides in the cytoplasm. It is found in the nucleus. It carries out the reaction S-ubiquitinyl-[E2 ubiquitin-conjugating enzyme]-L-cysteine + [acceptor protein]-L-lysine = [E2 ubiquitin-conjugating enzyme]-L-cysteine + N(6)-ubiquitinyl-[acceptor protein]-L-lysine.. The protein operates within protein modification; protein ubiquitination. Its function is as follows. E3 ubiquitin-protein ligase that is essential for proper development of the forebrain, the eye and the face. Catalyzes monoubiquitination of serine/threonine-protein phosphatase 2A (PP2A) catalytic subunit PPP2CA/PPP2CB. Negatively regulates nitric oxide production by inducing NOS1 and NOS3 translocation to actin cytoskeleton and inhibiting their enzymatic activity. The sequence is that of Nitric oxide synthase-interacting protein (Nosip) from Mus musculus (Mouse).